Consider the following 100-residue polypeptide: Urease subunit gamma (100 aa).

Belongs to the urease gamma subunit family. Heterotrimer of UreA (gamma), UreB (beta) and UreC (alpha) subunits. Three heterotrimers associate to form the active enzyme.

It is found in the cytoplasm. It carries out the reaction urea + 2 H2O + H(+) = hydrogencarbonate + 2 NH4(+). Its pathway is nitrogen metabolism; urea degradation; CO(2) and NH(3) from urea (urease route): step 1/1. The chain is Urease subunit gamma from Rhodopseudomonas palustris (strain ATCC BAA-98 / CGA009).